The primary structure comprises 72 residues: SRY-related protein ADW4 (72 aa).

Positions 1–69 form a DNA-binding region, HMG box; sequence VKRPMNAFMV…KHMADYPNYK (69 aa).

It is found in the nucleus. The chain is SRY-related protein ADW4 from Alligator mississippiensis (American alligator).